The primary structure comprises 117 residues: Ribonuclease P protein component (117 aa).

This sequence belongs to the RnpA family. As to quaternary structure, consists of a catalytic RNA component (M1 or rnpB) and a protein subunit.

It carries out the reaction Endonucleolytic cleavage of RNA, removing 5'-extranucleotides from tRNA precursor.. In terms of biological role, RNaseP catalyzes the removal of the 5'-leader sequence from pre-tRNA to produce the mature 5'-terminus. It can also cleave other RNA substrates such as 4.5S RNA. The protein component plays an auxiliary but essential role in vivo by binding to the 5'-leader sequence and broadening the substrate specificity of the ribozyme. This is Ribonuclease P protein component from Staphylococcus aureus (strain MW2).